Reading from the N-terminus, the 393-residue chain is MKPTCKRVFLIVMDSVGIGEAPDAEKYNDKGADTLGHIAEHRGGLNMPNMAKLGLSNIREIEGIPKAEKPLAYYTKMQEASAGKDTMTGHWELMGLRIDTPFQVFPDGFPKELIDELEKQTGRKVIGNKPASGTAIIDELGPEHMETGALIVYTSADSVLQIAAHEEVIPLEELYRICKIARELTLDEKYMVGRVIARPFIGTPGNFQRTANRHDYALKPFGRTVMNELQDAGYDVIAIGKIADIYDNEGVTKTLRTKSNMDGMDKLVNTLQMNFTGLSFLNLVDFDALYGHRRDPKGYGDALEEFDARLPEVFERLKEDDLLIITADHGNDPVHHGTDHTREYVPLLVYSPSMNGGKQLPLRETFADVGATIAENFGVKMPKYGTSFLQELK.

Mn(2+) is bound by residues aspartate 14, aspartate 287, histidine 292, aspartate 328, histidine 329, and histidine 340.

This sequence belongs to the phosphopentomutase family. Mn(2+) serves as cofactor.

Its subcellular location is the cytoplasm. It carries out the reaction 2-deoxy-alpha-D-ribose 1-phosphate = 2-deoxy-D-ribose 5-phosphate. The enzyme catalyses alpha-D-ribose 1-phosphate = D-ribose 5-phosphate. Its pathway is carbohydrate degradation; 2-deoxy-D-ribose 1-phosphate degradation; D-glyceraldehyde 3-phosphate and acetaldehyde from 2-deoxy-alpha-D-ribose 1-phosphate: step 1/2. Isomerase that catalyzes the conversion of deoxy-ribose 1-phosphate (dRib-1-P) and ribose 1-phosphate (Rib-1-P) to deoxy-ribose 5-phosphate (dRib-5-P) and ribose 5-phosphate (Rib-5-P), respectively. The sequence is that of Phosphopentomutase from Geobacillus stearothermophilus (Bacillus stearothermophilus).